The primary structure comprises 475 residues: Squamosa promoter-binding-like protein 12 (475 aa).

Residues 49–73 (NHGSTNSSGGTFTSSSELANGSSKS) form a disordered region. Over residues 51-73 (GSTNSSGGTFTSSSELANGSSKS) the composition is skewed to low complexity. An SBP-type zinc finger spans residues 177-254 (SSYCQVEGCK…SDHNARRRKP (78 aa)). Cys-180, Cys-185, Cys-202, His-205, Cys-221, Cys-224, His-228, and Cys-240 together coordinate Zn(2+). Positions 237–253 (KKSCRRRLSDHNARRRK) match the Bipartite nuclear localization signal motif. Residues 437-475 (GGGGFWQDGDDPPPLDHASQAQAFMHPGNGSSSGYGHLH) are disordered. Polar residues predominate over residues 465–475 (NGSSSGYGHLH).

In terms of tissue distribution, expressed in young panicles.

It localises to the nucleus. Trans-acting factor that binds specifically to the consensus nucleotide sequence 5'-TNCGTACAA-3'. May be involved in panicle development. The polypeptide is Squamosa promoter-binding-like protein 12 (SPL12) (Oryza sativa subsp. indica (Rice)).